Consider the following 206-residue polypeptide: Putative acetyltransferase OgpAT (206 aa).

Residues 5-205 form the N-acetyltransferase domain; that stretch reads VVIRRATAAD…EVVVGRRLLD (201 aa). Acetyl-CoA-binding positions include 135–138, 144–148, 175–177, and histidine 184; these read HIDL, GRGVG, and NPR.

Belongs to the acetyltransferase family. In terms of assembly, monomer.

In terms of biological role, binds acetyl-CoA, but not butyryl-CoA or decanoyl-CoA. May have acetyltransferase activity. This is Putative acetyltransferase OgpAT from Oceanicola granulosus (strain ATCC BAA-861 / DSM 15982 / KCTC 12143 / HTCC2516).